A 185-amino-acid chain; its full sequence is Ribosome-recycling factor (185 aa).

Belongs to the RRF family.

It is found in the cytoplasm. Responsible for the release of ribosomes from messenger RNA at the termination of protein biosynthesis. May increase the efficiency of translation by recycling ribosomes from one round of translation to another. This Lactococcus lactis subsp. cremoris (strain SK11) protein is Ribosome-recycling factor.